The primary structure comprises 458 residues: Translation initiation factor eIF2B subunit gamma (458 aa).

Ser291 carries the post-translational modification Phosphoserine.

The protein belongs to the eIF-2B gamma/epsilon subunits family. In terms of assembly, component of the translation initiation factor 2B (eIF2B) complex which is a heterodecamer of two sets of five different subunits: alpha, beta, gamma, delta and epsilon. Subunits alpha, beta and delta comprise a regulatory subcomplex and subunits epsilon and gamma comprise a catalytic subcomplex. Within the complex, the hexameric regulatory complex resides at the center, with the two heterodimeric catalytic subcomplexes bound on opposite sides.

Its subcellular location is the cytoplasm. It localises to the cytosol. Functionally, acts as a component of the translation initiation factor 2B (eIF2B) complex, which catalyzes the exchange of GDP for GTP on the eukaryotic initiation factor 2 (eIF2) complex gamma subunit. Its guanine nucleotide exchange factor activity is repressed when bound to eIF2 complex phosphorylated on the alpha subunit, thereby limiting the amount of methionyl-initiator methionine tRNA available to the ribosome and consequently global translation is repressed. This chain is Translation initiation factor eIF2B subunit gamma (tif223), found in Schizosaccharomyces pombe (strain 972 / ATCC 24843) (Fission yeast).